The sequence spans 499 residues: Alpha-L-arabinofuranosidase B (499 aa).

An N-terminal signal peptide occupies residues 1 to 17; that stretch reads MFSRRNLLALGLAATVS. The catalytic stretch occupies residues 18–335; that stretch reads AGPCDIYEAG…ENIVAAKYVV (318 aa). 3 cysteine pairs are disulfide-bonded: C21–C31, C81–C86, and C176–C177. N83 carries an N-linked (GlcNAc...) asparagine glycan. The N-linked (GlcNAc...) asparagine glycan is linked to N202. Position 219 (D219) interacts with substrate. E221 serves as the catalytic Nucleophile. The substrate site is built by N222, N223, and G296. Residue D297 is the Proton donor of the active site. The interval 336–499 is ABD; sequence GSLVSGPSFT…SFEIETAFAS (164 aa). An intrachain disulfide couples C401 to C439. Positions 416, 418, 419, 435, 463, 465, 468, and 488 each coordinate substrate.

The protein belongs to the glycosyl hydrolase 54 family.

It is found in the secreted. It catalyses the reaction Hydrolysis of terminal non-reducing alpha-L-arabinofuranoside residues in alpha-L-arabinosides.. The protein operates within glycan metabolism; L-arabinan degradation. Functionally, alpha-L-arabinofuranosidase involved in the degradation of arabinoxylan, a major component of plant hemicellulose. Able to hydrolyze 1,5-, 1,3- and 1,2-alpha-linkages not only in L-arabinofuranosyl oligosaccharides, but also in polysaccharides containing terminal non-reducing L-arabinofuranoses in side chains, like L-arabinan, arabinogalactan and arabinoxylan. This chain is Alpha-L-arabinofuranosidase B (abfB), found in Aspergillus kawachii (strain NBRC 4308) (White koji mold).